The chain runs to 185 residues: Ribosome-recycling factor (185 aa).

This sequence belongs to the RRF family.

The protein localises to the cytoplasm. Its function is as follows. Responsible for the release of ribosomes from messenger RNA at the termination of protein biosynthesis. May increase the efficiency of translation by recycling ribosomes from one round of translation to another. In Aliarcobacter butzleri (strain RM4018) (Arcobacter butzleri), this protein is Ribosome-recycling factor.